The chain runs to 405 residues: Nicotinate phosphoribosyltransferase (405 aa).

At histidine 230 the chain carries Phosphohistidine; by autocatalysis.

This sequence belongs to the NAPRTase family. Post-translationally, transiently phosphorylated on a His residue during the reaction cycle. Phosphorylation strongly increases the affinity for substrates and increases the rate of nicotinate D-ribonucleotide production. Dephosphorylation regenerates the low-affinity form of the enzyme, leading to product release.

It catalyses the reaction nicotinate + 5-phospho-alpha-D-ribose 1-diphosphate + ATP + H2O = nicotinate beta-D-ribonucleotide + ADP + phosphate + diphosphate. Its pathway is cofactor biosynthesis; NAD(+) biosynthesis; nicotinate D-ribonucleotide from nicotinate: step 1/1. In terms of biological role, catalyzes the synthesis of beta-nicotinate D-ribonucleotide from nicotinate and 5-phospho-D-ribose 1-phosphate at the expense of ATP. The sequence is that of Nicotinate phosphoribosyltransferase from Bordetella pertussis (strain Tohama I / ATCC BAA-589 / NCTC 13251).